The chain runs to 181 residues: Succinate dehydrogenase [ubiquinone] cytochrome b small subunit, mitochondrial (181 aa).

Residues 1 to 31 (MMLPRSMKFMTGRRIFHTATVRAFQSTAKKS) constitute a mitochondrion transit peptide. At 32-66 (LTIPFLPVLPQKPGGVRGTPNDAYVPPPENKLEGS) the chain is on the mitochondrial matrix side. Residues 67–88 (YHWYMEKIFALSVVPLATTAML) traverse the membrane as a helical segment. Residues 89–98 (TTGPLSTAAD) lie on the Mitochondrial intermembrane side of the membrane. Residues 99-118 (SFFSVMLLGYCYMEFNSCIT) form a helical membrane-spanning segment. C109 is a heme binding site. Residues 119 to 127 (DYISERVYG) are Mitochondrial matrix-facing. Y120 is a binding site for a ubiquinone. Residues 128 to 148 (VWHKYAMYMLGLGSAVSLFGI) traverse the membrane as a helical segment. At 149-181 (YKLETENDGVVGLVKSLWDSSEKDNSQKIEAKK) the chain is on the mitochondrial intermembrane side.

The protein belongs to the CybS family. Forms part of complex II containing four subunits: a flavoprotein (FP), an iron-sulfur protein (IP) and a cytochrome b composed of a large and a small subunit.

It is found in the mitochondrion inner membrane. Its pathway is carbohydrate metabolism; tricarboxylic acid cycle. Its function is as follows. Membrane-anchoring subunit of succinate dehydrogenase (SDH) that is involved in system II of the mitochondrial electron transport chain and is responsible for transferring electrons from succinate to ubiquinone (coenzyme Q). SDH3 and SDH4 form the membrane dimer that anchors the catalytic dimer formed by SDH1 and SDH2 to the matrix surface of the mitochondrial inner membrane. Electrons originating from the catalytic dimer enter the membrane dimer for ubiquinone reduction. This Saccharomyces cerevisiae (strain ATCC 204508 / S288c) (Baker's yeast) protein is Succinate dehydrogenase [ubiquinone] cytochrome b small subunit, mitochondrial (SDH4).